The sequence spans 300 residues: N-acetylmuramic acid 6-phosphate etherase (300 aa).

Residues Ile57–Lys220 enclose the SIS domain. The Proton donor role is filled by Glu85. The active site involves Glu116.

This sequence belongs to the GCKR-like family. MurNAc-6-P etherase subfamily. In terms of assembly, homodimer.

The enzyme catalyses N-acetyl-D-muramate 6-phosphate + H2O = N-acetyl-D-glucosamine 6-phosphate + (R)-lactate. The protein operates within amino-sugar metabolism; 1,6-anhydro-N-acetylmuramate degradation. It participates in amino-sugar metabolism; N-acetylmuramate degradation. It functions in the pathway cell wall biogenesis; peptidoglycan recycling. Functionally, specifically catalyzes the cleavage of the D-lactyl ether substituent of MurNAc 6-phosphate, producing GlcNAc 6-phosphate and D-lactate. Together with AnmK, is also required for the utilization of anhydro-N-acetylmuramic acid (anhMurNAc) either imported from the medium or derived from its own cell wall murein, and thus plays a role in cell wall recycling. The polypeptide is N-acetylmuramic acid 6-phosphate etherase (Aliivibrio fischeri (strain MJ11) (Vibrio fischeri)).